The following is a 785-amino-acid chain: SUN domain-containing protein 1 (785 aa).

The interval 1–138 is LMNA-binding; the sequence is MDFSRLHMYS…TRRPPVLDES (138 aa). Over 1–288 the chain is Nuclear; sequence MDFSRLHMYS…VFLLTRCLRN (288 aa). Residues serine 48, serine 100, and serine 138 each carry the phosphoserine modification. A Glycyl lysine isopeptide (Lys-Gly) (interchain with G-Cter in SUMO2) cross-link involves residue lysine 195. Residues 209–309 form an SYNE2-binding region; that stretch reads SRVYSRDRNQ…FLLLAGLSLR (101 aa). The EMD-binding stretch occupies residues 223–309; the sequence is LLQILRRIGA…FLLLAGLSLR (87 aa). A helical transmembrane segment spans residues 289–308; sequence ICKFLVLLIPLFLLLAGLSL. The Perinuclear space segment spans residues 309 to 785; that stretch reads RGQGNFFSFL…RFRVHGEPVK (477 aa). 2 positions are modified to phosphoserine: aspartate 333 and serine 344. Residues 428–495 adopt a coiled-coil conformation; that stretch reads HQEHEVRMSH…KSELSSWRHV (68 aa). The tract at residues 574-785 is sufficient for interaction with SYNE1 and SYNE2; sequence TSEAVVSAVS…RFRVHGEPVK (212 aa). Residues 622-784 form the SUN domain; the sequence is GGSILSTRCS…YRFRVHGEPV (163 aa).

In terms of assembly, core component of the LINC complex which is composed of inner nuclear membrane SUN domain-containing proteins coupled to outer nuclear membrane KASH domain-containing nesprins. SUN and KASH domain-containing proteins seem to bind each other promiscuously; however, differentially expression of LINC complex constituents is giving rise to specific assemblies. At least SUN1/2-containing core LINC complexes are proposed to be hexameric composed of three protomers of each KASH and SUN domain-containing protein. Interacts with KASH5 (via the last 22 amino acids); this interaction mediates KASH5 telomere localization by forming a SUN1:KASH5 LINC complex. May interact with SYNE3. Interacts with SYNE2 and SYNE1; probably forming respective LINC complexes. Interacts with A-type lamin with a strong preference for unprocessed A-type lamin compared with the mature protein. Interaction with lamins B1 and C is hardly detectable. Interacts with NAT10. Interacts with EMD and TSNAX. Associates with the nuclear pore complex (NPC). Interacts with CCDC79/TERB1; promoting the accumulation of the LINC complex complexes at the telomere-nuclear envelope attachment sites. Interacts (via KASH domain) with TMEM258. The disulfide bond with KASH domain-containing nesprins is required for stability of the respective LINC complexes under tensile forces.

It localises to the nucleus inner membrane. Its function is as follows. As a component of the LINC (LInker of Nucleoskeleton and Cytoskeleton) complex involved in the connection between the nuclear lamina and the cytoskeleton. The nucleocytoplasmic interactions established by the LINC complex play an important role in the transmission of mechanical forces across the nuclear envelope and in nuclear movement and positioning. Required for interkinetic nuclear migration (INM) and essential for nucleokinesis and centrosome-nucleus coupling during radial neuronal migration in the cerebral cortex and during glial migration. Involved in telomere attachment to nuclear envelope in the prophase of meiosis implicating a SUN1/2:KASH5 LINC complex in which SUN1 and SUN2 seem to act at least partial redundantly. Required for gametogenesis and involved in selective gene expression of coding and non-coding RNAs needed for gametogenesis. Helps to define the distribution of nuclear pore complexes (NPCs). Required for efficient localization of SYNE4 in the nuclear envelope. May be involved in nuclear remodeling during sperm head formation in spermatogenesis. May play a role in DNA repair by suppressing non-homologous end joining repair to facilitate the repair of DNA cross-links. The protein is SUN domain-containing protein 1 of Homo sapiens (Human).